A 204-amino-acid polypeptide reads, in one-letter code: Crossover junction endodeoxyribonuclease RuvC (204 aa).

Residues Asp-7, Glu-68, and Asp-141 contribute to the active site. Positions 7, 68, and 141 each coordinate Mg(2+).

This sequence belongs to the RuvC family. In terms of assembly, homodimer which binds Holliday junction (HJ) DNA. The HJ becomes 2-fold symmetrical on binding to RuvC with unstacked arms; it has a different conformation from HJ DNA in complex with RuvA. In the full resolvosome a probable DNA-RuvA(4)-RuvB(12)-RuvC(2) complex forms which resolves the HJ. Mg(2+) serves as cofactor.

It localises to the cytoplasm. It catalyses the reaction Endonucleolytic cleavage at a junction such as a reciprocal single-stranded crossover between two homologous DNA duplexes (Holliday junction).. In terms of biological role, the RuvA-RuvB-RuvC complex processes Holliday junction (HJ) DNA during genetic recombination and DNA repair. Endonuclease that resolves HJ intermediates. Cleaves cruciform DNA by making single-stranded nicks across the HJ at symmetrical positions within the homologous arms, yielding a 5'-phosphate and a 3'-hydroxyl group; requires a central core of homology in the junction. The consensus cleavage sequence is 5'-(A/T)TT(C/G)-3'. Cleavage occurs on the 3'-side of the TT dinucleotide at the point of strand exchange. HJ branch migration catalyzed by RuvA-RuvB allows RuvC to scan DNA until it finds its consensus sequence, where it cleaves and resolves the cruciform DNA. In Clavibacter sepedonicus (Clavibacter michiganensis subsp. sepedonicus), this protein is Crossover junction endodeoxyribonuclease RuvC.